We begin with the raw amino-acid sequence, 547 residues long: Glucose-6-phosphate isomerase 2 (547 aa).

Catalysis depends on Glu351, which acts as the Proton donor. Catalysis depends on residues His382 and Lys508.

It belongs to the GPI family.

It localises to the cytoplasm. It carries out the reaction alpha-D-glucose 6-phosphate = beta-D-fructose 6-phosphate. The protein operates within carbohydrate biosynthesis; gluconeogenesis. It participates in carbohydrate degradation; glycolysis; D-glyceraldehyde 3-phosphate and glycerone phosphate from D-glucose: step 2/4. In terms of biological role, catalyzes the reversible isomerization of glucose-6-phosphate to fructose-6-phosphate. The chain is Glucose-6-phosphate isomerase 2 from Neisseria meningitidis serogroup B (strain ATCC BAA-335 / MC58).